Reading from the N-terminus, the 462-residue chain is Tissue alpha-L-fucosidase (462 aa).

A signal peptide spans 1 to 28 (MWDLKSEWWAVGFGLLLLLAASAQAGGL). N-linked (GlcNAc...) asparagine glycans are attached at residues Asn-237, Asn-264, and Asn-378.

Belongs to the glycosyl hydrolase 29 family. Homotetramer.

The protein localises to the lysosome. The enzyme catalyses an alpha-L-fucoside + H2O = L-fucose + an alcohol. The catalysed reaction is a neolactoside IV(2)-alpha-Fuc-nLc4Cer(d18:1(4E)) + H2O = a neolactoside nLc4Cer(d18:1(4E)) + L-fucose. It catalyses the reaction a neolactoside IV(2)-alpha-Fuc-nLc4Cer(d18:0) + H2O = a neolactoside nLc4Cer(d18:0) + L-fucose. Functionally, alpha-L-fucosidase is responsible for hydrolyzing the alpha-1,6-linked fucose joined to the reducing-end N-acetylglucosamine of the carbohydrate moieties of glycoproteins. This Rattus norvegicus (Rat) protein is Tissue alpha-L-fucosidase (Fuca1).